We begin with the raw amino-acid sequence, 346 residues long: Sulfate/thiosulfate import ATP-binding protein CysA (346 aa).

Residues 3–237 (VRVANVRKEF…PNSPFVYGFI (235 aa)) form the ABC transporter domain. 35–42 (GPSGSGKT) provides a ligand contact to ATP.

It belongs to the ABC transporter superfamily. Sulfate/tungstate importer (TC 3.A.1.6) family. As to quaternary structure, the complex is composed of two ATP-binding proteins (CysA), two transmembrane proteins (CysT and CysW) and a solute-binding protein (CysP).

The protein localises to the cell inner membrane. It carries out the reaction sulfate(out) + ATP + H2O = sulfate(in) + ADP + phosphate + H(+). It catalyses the reaction thiosulfate(out) + ATP + H2O = thiosulfate(in) + ADP + phosphate + H(+). In terms of biological role, part of the ABC transporter complex CysAWTP involved in sulfate/thiosulfate import. Responsible for energy coupling to the transport system. The polypeptide is Sulfate/thiosulfate import ATP-binding protein CysA (Mesorhizobium japonicum (strain LMG 29417 / CECT 9101 / MAFF 303099) (Mesorhizobium loti (strain MAFF 303099))).